The following is a 172-amino-acid chain: MRLSFAAAISHGRVYRRLGLGPESRIHLLQNLLTGLVRHERIEASWARVDELRGYAEKLIDYGKLGDTNERAMRMADFWLTEKDLIPKLFQVLAPRYQGQNGGYTRMLQIPNRNQQDRAKMAVIEYKGNCLPPLPLPRRDSNLTLLNQLLRGLRQDQEASTRSSHPAQTPEV.

The transit peptide at 1–8 (MRLSFAAA) directs the protein to the mitochondrion.

Belongs to the bacterial ribosomal protein bL17 family. In terms of assembly, component of the mitochondrial ribosome large subunit (39S) which comprises a 16S rRNA and about 50 distinct proteins.

It localises to the mitochondrion. This chain is Large ribosomal subunit protein bL17m (MRPL17), found in Bos taurus (Bovine).